The following is a 542-amino-acid chain: Chondroitin sulfate N-acetylgalactosaminyltransferase 2 (542 aa).

Residues Met-1–Gln-13 are Cytoplasmic-facing. A helical; Signal-anchor for type II membrane protein membrane pass occupies residues Trp-14–Cys-34. The Lumenal segment spans residues Ala-35 to Gly-542. N-linked (GlcNAc...) asparagine glycosylation is present at Asn-41. The stretch at Ala-59 to Asn-105 forms a coiled coil. An N-linked (GlcNAc...) asparagine glycan is attached at Asn-333. The a divalent metal cation site is built by Asp-369 and His-486.

The protein belongs to the chondroitin N-acetylgalactosaminyltransferase family.

The protein localises to the golgi apparatus. The protein resides in the golgi stack membrane. The catalysed reaction is 3-O-(beta-D-GlcA-(1-&gt;3)-beta-D-Gal-(1-&gt;3)-beta-D-Gal-(1-&gt;4)-beta-D-Xyl)-L-seryl-[protein] + UDP-N-acetyl-alpha-D-galactosamine = 3-O-(beta-D-GalNAc-(1-&gt;4)-beta-D-GlcA-(1-&gt;3)-beta-D-Gal-(1-&gt;3)-beta-D-Gal-(1-&gt;4)-beta-D-Xyl)-L-seryl-[protein] + UDP + H(+). In terms of biological role, transfers 1,4-N-acetylgalactosamine (GalNAc) from UDP-GalNAc to the non-reducing end of glucuronic acid (GlcUA). Required for addition of the first GalNAc to the core tetrasaccharide linker and for elongation of chondroitin chains. The chain is Chondroitin sulfate N-acetylgalactosaminyltransferase 2 (Csgalnact2) from Mus musculus (Mouse).